We begin with the raw amino-acid sequence, 174 residues long: Endoribonuclease YbeY (174 aa).

The Zn(2+) site is built by histidine 133, histidine 137, and histidine 143.

Belongs to the endoribonuclease YbeY family. The cofactor is Zn(2+).

It localises to the cytoplasm. Its function is as follows. Single strand-specific metallo-endoribonuclease involved in late-stage 70S ribosome quality control and in maturation of the 3' terminus of the 16S rRNA. This is Endoribonuclease YbeY from Paracoccus denitrificans (strain Pd 1222).